A 458-amino-acid chain; its full sequence is Transcription termination factor Rho (458 aa).

The tract at residues 1–23 (MNTTNKESTAELNNTESNNNYNN) is disordered. The segment covering 10-23 (AELNNTESNNNYNN) has biased composition (low complexity). The Rho RNA-BD domain maps to 78–153 (LIVGEGVLEV…LKVNRVNFED (76 aa)). ATP-binding positions include 201 to 206 (GKGQRA), 213 to 218 (RTGKTV), and Arg-244.

This sequence belongs to the Rho family. In terms of assembly, homohexamer. The homohexamer assembles into an open ring structure.

Its function is as follows. Facilitates transcription termination by a mechanism that involves Rho binding to the nascent RNA, activation of Rho's RNA-dependent ATPase activity, and release of the mRNA from the DNA template. The sequence is that of Transcription termination factor Rho from Rickettsia conorii (strain ATCC VR-613 / Malish 7).